A 370-amino-acid polypeptide reads, in one-letter code: Dihydrolipoyllysine-residue acetyltransferase component of acetoin cleaving system (370 aa).

One can recognise a Lipoyl-binding domain in the interval 4 to 79 (IHTLTMPKWG…PVGALLAVVV (76 aa)). Lys-45 carries the N6-lipoyllysine modification. One can recognise an AB hydrolase-1 domain in the interval 135-355 (PLVLVHGFGG…EAGHMVQMEA (221 aa)).

It depends on (R)-lipoate as a cofactor.

The enzyme catalyses N(6)-[(R)-dihydrolipoyl]-L-lysyl-[protein] + acetyl-CoA = N(6)-[(R)-S(8)-acetyldihydrolipoyl]-L-lysyl-[protein] + CoA. The protein operates within ketone degradation; acetoin degradation. The protein is Dihydrolipoyllysine-residue acetyltransferase component of acetoin cleaving system (acoC) of Pseudomonas putida (Arthrobacter siderocapsulatus).